A 324-amino-acid polypeptide reads, in one-letter code: 26S proteasome non-ATPase regulatory subunit 7 (324 aa).

Residues 9–144 (VVVHPLVLLS…TEAYISVEEV (136 aa)) enclose the MPN domain. Residue Lys-180 forms a Glycyl lysine isopeptide (Lys-Gly) (interchain with G-Cter in ubiquitin) linkage. Residues Lys-204, Lys-214, Lys-316, and Lys-317 each carry the N6-acetyllysine modification. Positions 281–324 (ANRDAEKKEGQEKEESKKDRKEDKEKDKDKEKSDVKKEEKKEKK) are disordered.

The protein belongs to the peptidase M67A family. As to quaternary structure, component of the 19S proteasome regulatory particle complex. The 26S proteasome consists of a 20S core particle (CP) and two 19S regulatory subunits (RP). The regulatory particle is made of a lid composed of 9 subunits including PSMD7, a base containing 6 ATPases and few additional components. Within the complex, PSMD7 interacts with subunit PSMD4 through their respective MPN domain. Interacts with TRIM5.

Its function is as follows. Component of the 26S proteasome, a multiprotein complex involved in the ATP-dependent degradation of ubiquitinated proteins. This complex plays a key role in the maintenance of protein homeostasis by removing misfolded or damaged proteins, which could impair cellular functions, and by removing proteins whose functions are no longer required. Therefore, the proteasome participates in numerous cellular processes, including cell cycle progression, apoptosis, or DNA damage repair. In Homo sapiens (Human), this protein is 26S proteasome non-ATPase regulatory subunit 7 (PSMD7).